Reading from the N-terminus, the 681-residue chain is Elongation factor G (681 aa).

The tr-type G domain occupies 5–279 (KNIRNIGIIA…SIVNFLPSPI (275 aa)). Residues 14–21 (AHVDAGKT), 82–86 (DTPGH), and 136–139 (NKLD) each bind GTP.

The protein belongs to the TRAFAC class translation factor GTPase superfamily. Classic translation factor GTPase family. EF-G/EF-2 subfamily.

Its subcellular location is the cytoplasm. Catalyzes the GTP-dependent ribosomal translocation step during translation elongation. During this step, the ribosome changes from the pre-translocational (PRE) to the post-translocational (POST) state as the newly formed A-site-bound peptidyl-tRNA and P-site-bound deacylated tRNA move to the P and E sites, respectively. Catalyzes the coordinated movement of the two tRNA molecules, the mRNA and conformational changes in the ribosome. The chain is Elongation factor G from Carsonella ruddii (strain PV).